The chain runs to 431 residues: tRNA(Ile)-lysidine synthase (431 aa).

25–30 (SGGPDS) is a binding site for ATP.

This sequence belongs to the tRNA(Ile)-lysidine synthase family.

Its subcellular location is the cytoplasm. It catalyses the reaction cytidine(34) in tRNA(Ile2) + L-lysine + ATP = lysidine(34) in tRNA(Ile2) + AMP + diphosphate + H(+). Its function is as follows. Ligates lysine onto the cytidine present at position 34 of the AUA codon-specific tRNA(Ile) that contains the anticodon CAU, in an ATP-dependent manner. Cytidine is converted to lysidine, thus changing the amino acid specificity of the tRNA from methionine to isoleucine. This Lactobacillus gasseri (strain ATCC 33323 / DSM 20243 / BCRC 14619 / CIP 102991 / JCM 1131 / KCTC 3163 / NCIMB 11718 / NCTC 13722 / AM63) protein is tRNA(Ile)-lysidine synthase.